Consider the following 184-residue polypeptide: ADP-ribosylation factor-like protein 2 (184 aa).

A lipid anchor (N-myristoyl glycine) is attached at G2. 23–30 (GLDNAGKT) is a binding site for GTP. Residue S45 is modified to Phosphoserine. GTP is bound by residues 66 to 70 (DVGGQ) and G68. K71 participates in a covalent cross-link: Glycyl lysine isopeptide (Lys-Gly) (interchain with G-Cter in ubiquitin). 125 to 128 (NKQD) provides a ligand contact to GTP.

It belongs to the small GTPase superfamily. Arf family. As to quaternary structure, found in a complex with ARL2, ARL2BP and SLC25A6. Found in a complex with at least ARL2, PPP2CB, PPP2R1A, PPP2R2A, PPP2R5E and TBCD. Interacts with ELMOD2. The GTP-bound form interacts with ARL2BP. The GDP-bound form interacts preferentially with TBCD. Interacts with UNC119. Found in a complex with ARL2, ARL2BP and SLC25A4. The GTP-bound form interacts with PDE6D. Not N-myristoylated. In terms of tissue distribution, expressed in brain, retina, lung, cerebellum, liver, kidney, hippocampus, spleen, cortex and heart (at protein level).

Its subcellular location is the mitochondrion intermembrane space. The protein resides in the cytoplasm. The protein localises to the cytoskeleton. It localises to the microtubule organizing center. It is found in the centrosome. Its subcellular location is the nucleus. In terms of biological role, small GTP-binding protein which cycles between an inactive GDP-bound and an active GTP-bound form, and the rate of cycling is regulated by guanine nucleotide exchange factors (GEF) and GTPase-activating proteins (GAP). GTP-binding protein that does not act as an allosteric activator of the cholera toxin catalytic subunit. Regulates formation of new microtubules and centrosome integrity. Prevents the TBCD-induced microtubule destruction. Participates in association with TBCD, in the disassembly of the apical junction complexes. Antagonizes the effect of TBCD on epithelial cell detachment and tight and adherens junctions disassembly. Together with ARL2, plays a role in the nuclear translocation, retention and transcriptional activity of STAT3. Component of a regulated secretory pathway involved in Ca(2+)-dependent release of acetylcholine. Required for normal progress through the cell cycle. The protein is ADP-ribosylation factor-like protein 2 (Arl2) of Rattus norvegicus (Rat).